Consider the following 241-residue polypeptide: MSSVVNAAYAEYNGKEKGDQEDPRVLIPQLCRLFYELGWVTGTGGGISLRHGEHIYIAPSGVQKERIQPEDLFVCDIDEKDISCPPPQKKLKKSQCTPPFMNAYTMRGAQAVIHTHSKSAVMATLLFPGKEFRITHQEMIKGIRKGNSGTNFRYDDTLVVPIIENTPEEKDLKERMARAMDMYPDSCAVLVRRHGVYVWGETWEKAKTMCECYDYLFDIAVQMKQSGLDPSAFPTEEKGIV.

A substrate-binding site is contributed by C96. H114 and H116 together coordinate Zn(2+). E138 functions as the Proton donor/acceptor in the catalytic mechanism. H194 serves as a coordination point for Zn(2+).

The protein belongs to the aldolase class II family. MtnB subfamily. Zn(2+) serves as cofactor.

The protein localises to the cytoplasm. The catalysed reaction is 5-(methylsulfanyl)-D-ribulose 1-phosphate = 5-methylsulfanyl-2,3-dioxopentyl phosphate + H2O. Its pathway is amino-acid biosynthesis; L-methionine biosynthesis via salvage pathway; L-methionine from S-methyl-5-thio-alpha-D-ribose 1-phosphate: step 2/6. In terms of biological role, catalyzes the dehydration of methylthioribulose-1-phosphate (MTRu-1-P) into 2,3-diketo-5-methylthiopentyl-1-phosphate (DK-MTP-1-P). Functions in the methionine salvage pathway. May play a role in apoptosis. The chain is Methylthioribulose-1-phosphate dehydratase from Danio rerio (Zebrafish).